The chain runs to 162 residues: Necrosis-inducing secreted protein 1 (162 aa).

Residues 1–19 form the signal peptide; the sequence is MQFLTSLAAAASLVSLASA. Residues asparagine 88, asparagine 126, asparagine 133, and asparagine 150 are each glycosylated (N-linked (GlcNAc...) asparagine). The interval 103–132 is BAK1/SERK3-binding; the sequence is EYVIAASLFSLYGASSSPTVSNYNVTVNVG.

The protein belongs to the NIS1 effector family. Interacts with the host pattern recognition receptor (PRR)-associated kinases BAK1/SERK3, BKK1/SERK4 and BIK1.

Its subcellular location is the secreted. It localises to the host cytoplasm. Secreted effector that induces necrotic lesions in Nicotiana benthamiana. Interacts with the host receptor-like kinases (RLKs) BAK1/SERK3 and BKK1/SERK4, inhibits their kinase activity and suppresses INF1-induced pathogen-associated molecular pattern (PAMP)-triggered immunity (PTI) in N.benthamiana. Also interacts with the host receptor-like cytoplasmic kinase (RLCK) BIK1 and inhibits its kinase activity, thereby inhibiting PAMP-induced ROS generation. In PTI, phosphorylation relaying by RLKs and RLCKs is critical for the initiation of downstream signaling. The chain is Necrosis-inducing secreted protein 1 from Colletotrichum orbiculare (strain 104-T / ATCC 96160 / CBS 514.97 / LARS 414 / MAFF 240422) (Cucumber anthracnose fungus).